Consider the following 1188-residue polypeptide: DNA-directed RNA polymerase subunit beta (1188 aa).

This sequence belongs to the RNA polymerase beta chain family. The RNAP catalytic core consists of 2 alpha, 1 beta, 1 beta' and 1 omega subunit. When a sigma factor is associated with the core the holoenzyme is formed, which can initiate transcription.

It carries out the reaction RNA(n) + a ribonucleoside 5'-triphosphate = RNA(n+1) + diphosphate. Its function is as follows. DNA-dependent RNA polymerase catalyzes the transcription of DNA into RNA using the four ribonucleoside triphosphates as substrates. This is DNA-directed RNA polymerase subunit beta from Streptococcus sanguinis (strain SK36).